The primary structure comprises 234 residues: 2,3,4,5-tetrahydropyridine-2,6-dicarboxylate N-acetyltransferase (234 aa).

This sequence belongs to the transferase hexapeptide repeat family. DapH subfamily.

The enzyme catalyses (S)-2,3,4,5-tetrahydrodipicolinate + acetyl-CoA + H2O = L-2-acetamido-6-oxoheptanedioate + CoA. Its pathway is amino-acid biosynthesis; L-lysine biosynthesis via DAP pathway; LL-2,6-diaminopimelate from (S)-tetrahydrodipicolinate (acetylase route): step 1/3. Catalyzes the transfer of an acetyl group from acetyl-CoA to tetrahydrodipicolinate. This Lacticaseibacillus paracasei (strain ATCC 334 / BCRC 17002 / CCUG 31169 / CIP 107868 / KCTC 3260 / NRRL B-441) (Lactobacillus paracasei) protein is 2,3,4,5-tetrahydropyridine-2,6-dicarboxylate N-acetyltransferase.